The following is a 969-amino-acid chain: Protein translocase subunit SecA (969 aa).

Residues glutamine 99, 117-121 (GEGKT), and aspartate 631 each bind ATP.

This sequence belongs to the SecA family. As to quaternary structure, monomer and homodimer. Part of the essential Sec protein translocation apparatus which comprises SecA, SecYEG and auxiliary proteins SecDF. Other proteins may also be involved.

It is found in the cell inner membrane. It localises to the cytoplasm. It catalyses the reaction ATP + H2O + cellular proteinSide 1 = ADP + phosphate + cellular proteinSide 2.. Its function is as follows. Part of the Sec protein translocase complex. Interacts with the SecYEG preprotein conducting channel. Has a central role in coupling the hydrolysis of ATP to the transfer of proteins into and across the cell membrane, serving as an ATP-driven molecular motor driving the stepwise translocation of polypeptide chains across the membrane. The chain is Protein translocase subunit SecA from Chlamydia trachomatis serovar D (strain ATCC VR-885 / DSM 19411 / UW-3/Cx).